Reading from the N-terminus, the 316-residue chain is Solute carrier family 25 member 32 (316 aa).

Solcar repeat units follow at residues 20–109 (HVRY…IKSY), 118–209 (LEPL…LKLK), and 222–306 (LSTA…VSHF). The next 6 helical transmembrane spans lie at 26–46 (LVAG…LDLV), 89–106 (VWGA…YNAI), 123–143 (YLVS…PLWV), 185–203 (GFVP…FMAY), 227–243 (YISV…AATY), and 281–300 (GIAP…FVVY).

Belongs to the mitochondrial carrier (TC 2.A.29) family.

The protein localises to the mitochondrion inner membrane. The catalysed reaction is FAD(in) = FAD(out). Its function is as follows. Facilitates flavin adenine dinucleotide (FAD) translocation across the mitochondrial inner membrane into the mitochondrial matrix where it acts as a redox cofactor to assist flavoenzyme activities in fundamental metabolic processes including fatty acid beta-oxidation, amino acid and choline metabolism as well as mitochondrial electron transportation. In particular, provides FAD to DLD dehydrogenase of the glycine cleavage system, part of mitochondrial one-carbon metabolic pathway involved in neural tube closure in early embryogenesis. In Mus musculus (Mouse), this protein is Solute carrier family 25 member 32.